A 331-amino-acid polypeptide reads, in one-letter code: Olfactory receptor 6K3 (331 aa).

Residues 1 to 41 (MCWTMPSPFTGSSTRNMESGNQSTVTEFIFTGFPQLQDGSL) lie on the Extracellular side of the membrane. An N-linked (GlcNAc...) asparagine glycan is attached at asparagine 21. A helical transmembrane segment spans residues 42–62 (LYFFPLLFIYTFIIIDNLLIF). The Cytoplasmic portion of the chain corresponds to 63-70 (SAVRLDTH). A helical membrane pass occupies residues 71–91 (LHNPMYNFISIFSFLEIWYTT). The Extracellular portion of the chain corresponds to 92–115 (ATIPKMLSNLISEKKAISMTGCIL). Residues cysteine 113 and cysteine 205 are joined by a disulfide bond. A helical membrane pass occupies residues 116-136 (QMYFFHSLENSEGILLTTMAI). At 137–155 (DRYVAICNPLRYQMIMTPR) the chain is on the cytoplasmic side. The chain crosses the membrane as a helical span at residues 156-176 (LCAQLSAGSCLFGFLILLPEI). The Extracellular segment spans residues 177 to 212 (VMISTLPFCGPNQIHQIFCDLVPVLSLACTDTSMIL). A helical transmembrane segment spans residues 213-232 (IEDVIHAVTIIITFLIIALS). At 233 to 252 (YVRIVTVILRIPSSEGRQKA) the chain is on the cytoplasmic side. A helical transmembrane segment spans residues 253 to 273 (FSTCAGHLMVFPIFFGSVSLM). Residues 274-286 (YLRFSDTYPPVLD) are Extracellular-facing. Residues 287–307 (TAIALMFTVLAPFFNPIIYSL) traverse the membrane as a helical segment. Residues 308–331 (RNKDMNNAIKKLFCLQKVLNKPGG) are Cytoplasmic-facing.

The protein belongs to the G-protein coupled receptor 1 family.

Its subcellular location is the cell membrane. In terms of biological role, odorant receptor. The protein is Olfactory receptor 6K3 (OR6K3) of Homo sapiens (Human).